We begin with the raw amino-acid sequence, 170 residues long: Peptide deformylase (170 aa).

Fe cation-binding residues include Cys88 and His130. Residue Glu131 is part of the active site. Residue His134 participates in Fe cation binding.

It belongs to the polypeptide deformylase family. Requires Fe(2+) as cofactor.

The catalysed reaction is N-terminal N-formyl-L-methionyl-[peptide] + H2O = N-terminal L-methionyl-[peptide] + formate. Functionally, removes the formyl group from the N-terminal Met of newly synthesized proteins. Requires at least a dipeptide for an efficient rate of reaction. N-terminal L-methionine is a prerequisite for activity but the enzyme has broad specificity at other positions. This Acetivibrio thermocellus (strain ATCC 27405 / DSM 1237 / JCM 9322 / NBRC 103400 / NCIMB 10682 / NRRL B-4536 / VPI 7372) (Clostridium thermocellum) protein is Peptide deformylase.